The primary structure comprises 306 residues: ATP phosphoribosyltransferase (306 aa).

Belongs to the ATP phosphoribosyltransferase family.

Its subcellular location is the cytoplasm. It catalyses the reaction 1-(5-phospho-beta-D-ribosyl)-ATP + diphosphate = 5-phospho-alpha-D-ribose 1-diphosphate + ATP. Its pathway is amino-acid biosynthesis; L-histidine biosynthesis; L-histidine from 5-phospho-alpha-D-ribose 1-diphosphate: step 1/9. Functionally, catalyzes the condensation of ATP and 5-phosphoribose 1-diphosphate to form N'-(5'-phosphoribosyl)-ATP (PR-ATP). Has a crucial role in the pathway because the rate of histidine biosynthesis seems to be controlled primarily by regulation of the enzymatic activity. This chain is ATP phosphoribosyltransferase (HIS1), found in Candida glabrata (strain ATCC 2001 / BCRC 20586 / JCM 3761 / NBRC 0622 / NRRL Y-65 / CBS 138) (Yeast).